The primary structure comprises 78 residues: uncharacterized protein (78 aa).

This is an uncharacterized protein from Amsacta (AmEPV).